Here is a 1035-residue protein sequence, read N- to C-terminus: Eukaryotic translation initiation factor 3 subunit A (1035 aa).

Positions 92 to 121 form a coiled coil; the sequence is LKKFIELAEKKVTEAQAKADEIQSSLESAA. The PCI domain occupies 339 to 523; the sequence is MTKAASFVLL…GVLTFDTDVF (185 aa). The stretch at 606 to 910 forms a coiled coil; sequence ERRVIIEKKK…LRAKRAGLSE (305 aa). Basic and acidic residues-rich tracts occupy residues 619–632 and 809–901; these read TDALQRKQKEEETR and KAAE…EARL. Disordered stretches follow at residues 619–649 and 809–1035; these read TDALQRKQKEEETRKRIRTQQLQEAEKQRLA and KAAE…QQNQ. 2 stretches are compositionally biased toward low complexity: residues 943–953 and 988–1004; these read KEAAGGAAPEA and PPSQRSSQPPSRTQTPP.

It belongs to the eIF-3 subunit A family. As to quaternary structure, component of the eukaryotic translation initiation factor 3 (eIF-3) complex.

It is found in the cytoplasm. RNA-binding component of the eukaryotic translation initiation factor 3 (eIF-3) complex, which is involved in protein synthesis of a specialized repertoire of mRNAs and, together with other initiation factors, stimulates binding of mRNA and methionyl-tRNAi to the 40S ribosome. The eIF-3 complex specifically targets and initiates translation of a subset of mRNAs involved in cell proliferation. This Emericella nidulans (strain FGSC A4 / ATCC 38163 / CBS 112.46 / NRRL 194 / M139) (Aspergillus nidulans) protein is Eukaryotic translation initiation factor 3 subunit A (tif32).